The primary structure comprises 346 residues: MNPHATPVLVLSLALGTTITISSNHWVLAWTGLEINTLAIIPLISKSHHPRAVEAATKYFLTQAAASALVLFSSMTNAWATGQWDITQLNHPTSCLLLTAAIAIKLGLVPFHFWFPEVLQGSPLMTALLLSTLMKFPPLTLLLMTSKSLNPALLTTMALASAALGGWMGLNQTQTRKILAFSSISHLGWIAIILVYNPKLALLTFYLYTIMTSAVFMALNKIKALNLSMILTSWTKTPVLNATLMLVLLSLAGLPPLTGFMPKWLIIQELTKQEMTPAAMAIAMLSLLSLFFYLRLAYHSTITLPPNSSNHMKQWYTSKPPSTPTAILASLSILLLPLSPMIHAIV.

The next 11 membrane-spanning stretches (helical) occupy residues 1 to 21 (MNPHATPVLVLSLALGTTITI), 25 to 45 (HWVLAWTGLEINTLAIIPLIS), 60 to 80 (FLTQAAASALVLFSSMTNAWA), 95 to 115 (CLLLTAAIAIKLGLVPFHFWF), 124 to 144 (LMTALLLSTLMKFPPLTLLLM), 149 to 169 (LNPALLTTMALASAALGGWMG), 178 to 195 (ILAFSSISHLGWIAIILV), 200 to 219 (LALLTFYLYTIMTSAVFMAL), 242 to 262 (ATLMLVLLSLAGLPPLTGFMP), 274 to 294 (EMTPAAMAIAMLSLLSLFFYL), and 326 to 346 (AILASLSILLLPLSPMIHAIV).

The protein belongs to the complex I subunit 2 family.

It localises to the mitochondrion inner membrane. The enzyme catalyses a ubiquinone + NADH + 5 H(+)(in) = a ubiquinol + NAD(+) + 4 H(+)(out). Core subunit of the mitochondrial membrane respiratory chain NADH dehydrogenase (Complex I) that is believed to belong to the minimal assembly required for catalysis. Complex I functions in the transfer of electrons from NADH to the respiratory chain. The immediate electron acceptor for the enzyme is believed to be ubiquinone. The protein is NADH-ubiquinone oxidoreductase chain 2 (MT-ND2) of Sibirionetta formosa (Baikal teal).